Consider the following 64-residue polypeptide: DNA gyrase inhibitor YacG (64 aa).

Zn(2+)-binding residues include cysteine 7, cysteine 10, cysteine 26, and cysteine 30. The tract at residues 44–64 (RIPGEIDPELLPYPEEGEQWQ) is disordered.

It belongs to the DNA gyrase inhibitor YacG family. As to quaternary structure, interacts with GyrB. Zn(2+) is required as a cofactor.

Functionally, inhibits all the catalytic activities of DNA gyrase by preventing its interaction with DNA. Acts by binding directly to the C-terminal domain of GyrB, which probably disrupts DNA binding by the gyrase. This chain is DNA gyrase inhibitor YacG, found in Aeromonas hydrophila subsp. hydrophila (strain ATCC 7966 / DSM 30187 / BCRC 13018 / CCUG 14551 / JCM 1027 / KCTC 2358 / NCIMB 9240 / NCTC 8049).